The primary structure comprises 189 residues: Interferon alpha-H (189 aa).

An N-terminal signal peptide occupies residues 1-23 (MAPAWSFLLALLLLSCNAICSLG). 2 cysteine pairs are disulfide-bonded: C24–C122 and C52–C162.

This sequence belongs to the alpha/beta interferon family.

The protein localises to the secreted. Functionally, produced by macrophages, IFN-alpha have antiviral activities. Interferon stimulates the production of two enzymes: a protein kinase and an oligoadenylate synthetase. The polypeptide is Interferon alpha-H (IFNAH) (Bos taurus (Bovine)).